A 428-amino-acid chain; its full sequence is 3-phosphoshikimate 1-carboxyvinyltransferase (428 aa).

3-phosphoshikimate contacts are provided by K19, S20, and R24. K19 is a binding site for phosphoenolpyruvate. Positions 91 and 119 each coordinate phosphoenolpyruvate. Residues S164, Q166, D312, and K339 each coordinate 3-phosphoshikimate. Position 166 (Q166) interacts with phosphoenolpyruvate. D312 (proton acceptor) is an active-site residue. Phosphoenolpyruvate is bound by residues R343 and R386.

It belongs to the EPSP synthase family. As to quaternary structure, monomer.

Its subcellular location is the cytoplasm. It carries out the reaction 3-phosphoshikimate + phosphoenolpyruvate = 5-O-(1-carboxyvinyl)-3-phosphoshikimate + phosphate. Its pathway is metabolic intermediate biosynthesis; chorismate biosynthesis; chorismate from D-erythrose 4-phosphate and phosphoenolpyruvate: step 6/7. Its function is as follows. Catalyzes the transfer of the enolpyruvyl moiety of phosphoenolpyruvate (PEP) to the 5-hydroxyl of shikimate-3-phosphate (S3P) to produce enolpyruvyl shikimate-3-phosphate and inorganic phosphate. In Bacillus licheniformis (strain ATCC 14580 / DSM 13 / JCM 2505 / CCUG 7422 / NBRC 12200 / NCIMB 9375 / NCTC 10341 / NRRL NRS-1264 / Gibson 46), this protein is 3-phosphoshikimate 1-carboxyvinyltransferase.